The following is a 108-amino-acid chain: MIQPSKFENLIAIYDIIFCCLQVYLLCKYKDANKSVFLVPVTWPWALRCSWTTRLLCHDNLVNGKHSSCSFCSDVNSKLFRCKHVINIFLSDVLYTFIRFAINIHTFI.

The N-linked (GlcNAc...) asparagine glycan is linked to N33.

In terms of processing, N-glycosylated.

This is an uncharacterized protein from Saccharomyces cerevisiae (strain ATCC 204508 / S288c) (Baker's yeast).